The chain runs to 541 residues: Carboxypeptidase Y homolog A (541 aa).

The first 17 residues, 1–17 (MKVATSALLIGAAAAQQ), serve as a signal peptide directing secretion. A propeptide spanning residues 18–125 (QQILKFPDSF…KLEQYSLRAK (108 aa)) is cleaved from the precursor. 5 cysteine pairs are disulfide-bonded: C179–C418, C313–C327, C337–C360, C344–C353, and C382–C388. N-linked (GlcNAc...) asparagine glycosylation occurs at N210. The active site involves S266. D457 is an active-site residue. N-linked (GlcNAc...) asparagine glycosylation occurs at N505. H516 is a catalytic residue.

It belongs to the peptidase S10 family.

It localises to the vacuole. It catalyses the reaction Release of a C-terminal amino acid with broad specificity.. Vacuolar carboxypeptidase involved in degradation of small peptides. Digests preferentially peptides containing an aliphatic or hydrophobic residue in P1' position, as well as methionine, leucine or phenylalanine in P1 position of ester substrate. This is Carboxypeptidase Y homolog A (cpyA) from Pyrenophora tritici-repentis (strain Pt-1C-BFP) (Wheat tan spot fungus).